The sequence spans 364 residues: MAQQTPLYEQHTLCGARMVDFHGWMMPLHYGSQIDEHHAVRTDAGMFDVSHMTIVDLRGSRTREFLRYLLANDVAKLTKSGKALYSGMLNASGGVIDDLIVYYFSEDFFRLVVNSATREKDLSWITQHAEPFGIEITVRDDLSMIAVQGPNAQAKAATLFNDAQRQAVEGMKPFFGVQAGDLFIATTGYTGEAGYEIALPNEKAADFWRALVEAGVKPCGLGARDTLRLEAGMNLYGQEMDETISPLAANMGWTIAWEPADRDFIGREALEAQREHGTEKLVGLVMTEKGVLRNELPVRFTDAQGNQHEGIITSGTFSPTLGYSIALARVPEGIGETAIVQIRNREMPVKVTKPVFVRNGKAVA.

The protein belongs to the GcvT family. As to quaternary structure, the glycine cleavage system is composed of four proteins: P, T, L and H.

The enzyme catalyses N(6)-[(R)-S(8)-aminomethyldihydrolipoyl]-L-lysyl-[protein] + (6S)-5,6,7,8-tetrahydrofolate = N(6)-[(R)-dihydrolipoyl]-L-lysyl-[protein] + (6R)-5,10-methylene-5,6,7,8-tetrahydrofolate + NH4(+). Functionally, the glycine cleavage system catalyzes the degradation of glycine. The sequence is that of Aminomethyltransferase from Escherichia coli O17:K52:H18 (strain UMN026 / ExPEC).